Consider the following 175-residue polypeptide: Large ribosomal subunit protein uL10 (175 aa).

Belongs to the universal ribosomal protein uL10 family. Part of the ribosomal stalk of the 50S ribosomal subunit. The N-terminus interacts with L11 and the large rRNA to form the base of the stalk. The C-terminus forms an elongated spine to which L12 dimers bind in a sequential fashion forming a multimeric L10(L12)X complex.

Its function is as follows. Forms part of the ribosomal stalk, playing a central role in the interaction of the ribosome with GTP-bound translation factors. This chain is Large ribosomal subunit protein uL10, found in Pelotomaculum thermopropionicum (strain DSM 13744 / JCM 10971 / SI).